We begin with the raw amino-acid sequence, 340 residues long: CRISPR system Cmr subunit Cmr6 (340 aa).

Belongs to the CRISPR system Cmr6 family. In terms of assembly, part of the type III-B Cmr ribonucleoprotein (RNP) complex, an elongated RNP with Cmr2 and Cmr3 as the base, with Cmr4 and Cmr5 forming a helical core along the mature crRNA (39 or 45 nt in length), while the complex is capped by Cmr6 and Cmr1. The 5' end of the crRNA is bound to Cmr2 and Cmr3, while Cmr6 and a Cmr1 subunit (Cmr1-1 or Cmr1-2) cap the 3' end of the crRNA. The target RNA lies antiparallel to the crRNA, with its 5' end near Cmr1 and Cmr6 and its 3' end near Cmr2 and Cmr3; major target cleavage occurs nears the junction of Cmr1/Cmr6 and Cmr4/Cmr, with minor cleavage occurring at 6 nt intervals which coincide with the proposed spacing of Cmr4 subunits. Interacts with Cmr4 and Cmr5.

Its subcellular location is the cytoplasm. In terms of biological role, CRISPR (clustered regularly interspaced short palindromic repeat), is an adaptive immune system that provides protection against mobile genetic elements (viruses, transposable elements and conjugative plasmids). CRISPR clusters contain sequences complementary to antecedent mobile elements and target invading nucleic acids. CRISPR clusters are transcribed and processed into CRISPR RNA (crRNA), formerly called psiRNA (prokaryotic silencing) in this organism. Part of the Cmr ribonucleoprotein complex which has divalent cation-dependent endoribonuclease activity specific for ssRNA complementary to the crRNA (target RNA), generating 5' hydroxy- and 3' phosphate or 2'-3' cyclic phosphate termini. Cmr4 is probably the subunit that cleaves target RNA. Cmr complex does not cleave ssDNA complementary to the crRNA. Cleavage of invading RNA is guided by the crRNA; substrate cleavage occurs a fixed distance (14 nt) from the 3' end of the crRNA. In vitro reconstitution shows Cmr1-2 and Cmr5 are not absolutely necessary for target cleavage. This Pyrococcus furiosus (strain ATCC 43587 / DSM 3638 / JCM 8422 / Vc1) protein is CRISPR system Cmr subunit Cmr6.